We begin with the raw amino-acid sequence, 449 residues long: Cyclin-B1-1 (449 aa).

Disordered regions lie at residues 1–34 (MATR…VAGR) and 90–143 (AVAP…SVRK). Composition is skewed to low complexity over residues 90–102 (AVAP…PAQR) and 121–134 (EISS…RQQS).

It belongs to the cyclin family. Cyclin AB subfamily.

The protein is Cyclin-B1-1 (CYCB1-1) of Oryza sativa subsp. japonica (Rice).